Consider the following 244-residue polypeptide: Myosin-7 (244 aa).

Positions 1–244 (VEQTERSRKL…DIGTKGLNEE (244 aa)) are rodlike tail (S2 and LMM domains). Positions 1–244 (VEQTERSRKL…DIGTKGLNEE (244 aa)) form a coiled coil. Positions 216–244 (EERADIAESQVNKLRAKSRDIGTKGLNEE) are disordered. The span at 232-244 (KSRDIGTKGLNEE) shows a compositional bias: basic and acidic residues.

In terms of assembly, muscle myosin is a hexameric protein that consists of 2 heavy chain subunits (MHC), 2 alkali light chain subunits (MLC) and 2 regulatory light chain subunits (MLC-2). Interacts with ECPAS. Interacts (via C-terminus) with LRRC39.

The protein resides in the cytoplasm. It is found in the myofibril. Its subcellular location is the sarcomere. Functionally, myosins are actin-based motor molecules with ATPase activity essential for muscle contraction. Forms regular bipolar thick filaments that, together with actin thin filaments, constitute the fundamental contractile unit of skeletal and cardiac muscle. This is Myosin-7 (MYH7) from Papio hamadryas (Hamadryas baboon).